Reading from the N-terminus, the 289-residue chain is Diacylglycerol pyrophosphate phosphatase 1 (289 aa).

Residues 1–21 (MNRVSFIKTPFNIGAKWRLED) are Vacuolar-facing. Residues 22–42 (VFLLIIMILLNYPVYYQQPFE) traverse the membrane as a helical segment. The Cytoplasmic segment spans residues 43–65 (RQFYINDLTISHPYATTERVNNN). Residues 66 to 86 (MLFVYSFVVPSLTILIIGSIL) traverse the membrane as a helical segment. The Vacuolar portion of the chain corresponds to 87–92 (ADRRHL). Residues 93–113 (IFILYTSLLGLSLAWFSTSFF) form a helical membrane-spanning segment. Residues 114-172 (TNFIKNWIGRLRPDFLDRCQPVEGLPLDTLFTAKDVCTTKNHERLLDGFRTTPSGHSSE) lie on the Cytoplasmic side of the membrane. Residues 118-126 (KNWIGRLRP) form a phosphatase sequence motif I region. A phosphatase sequence motif II region spans residues 166 to 169 (PSGH). 2 consecutive transmembrane segments (helical) span residues 173-193 (SFAGLGYLYFWLCGQLLTESP) and 194-214 (LMPLWRKMVAFLPLLGAALIA). The Cytoplasmic segment spans residues 215–222 (LSRTQDYR). Residues 216–227 (SRTQDYRHHFVD) form a phosphatase sequence motif III region. Residues 223–243 (HHFVDVILGSMLGYIMAHFFY) traverse the membrane as a helical segment. Residues 244–289 (RRIFPPIDDPLPFKPLMDDSDVTLEEAVTHQRIPDEELHPLSDEGM) lie on the Vacuolar side of the membrane. Ser285 is subject to Phosphoserine.

Belongs to the PA-phosphatase related phosphoesterase family.

It is found in the vacuole membrane. The catalysed reaction is a 1,2-diacyl-sn-glycerol 3-diphosphate + H2O = a 1,2-diacyl-sn-glycero-3-phosphate + phosphate + H(+). The enzyme catalyses a 1,2-diacyl-sn-glycero-3-phosphate + H2O = a 1,2-diacyl-sn-glycerol + phosphate. It carries out the reaction a 1-acyl-sn-glycero-3-phosphate + H2O = a 1-acyl-sn-glycerol + phosphate. With respect to regulation, inhibited by sodium fluoride (NaF) and pyrophosphate. Strongly inhibited by manganese ion and, to a lower extent, by magnesium and calcium ions. Also inhibited by Cu(2+) ion. In an indirect manner, it is also inhibited by the zinc ion which is able to form a complex with DGPP and prevent the enzyme from removing the phosphate from the substrate. Not inhibited by N-ethylmaleimide. Catalyzes the dephosphorylation of diacylglycerol diphosphate (DGPP) to phosphatidate (PA) and the subsequent dephosphorylation of PA to diacylglycerol (DAG). Together with LPP1, regulates intracellular DGPP and PA levels, which are phospholipid molecules believed to play a signaling role in stress response. Can also use lysophosphatidic acid (LPA) and phosphatidylglycerophosphate as substrates. Substrate preference is DGPP &gt; LPA &gt; PA. Activity is independent of a divalent cation ion and insensitive to inhibition by N-ethylmaleimide. This chain is Diacylglycerol pyrophosphate phosphatase 1 (DPP1), found in Saccharomyces cerevisiae (strain ATCC 204508 / S288c) (Baker's yeast).